A 45-amino-acid polypeptide reads, in one-letter code: Photosystem II reaction center protein K (45 aa).

The propeptide occupies 1 to 8; that stretch reads METIYLLA. The chain crosses the membrane as a helical span at residues 16–40; sequence IFDPLVDVLPVIPLFFLALAFVWQA.

It belongs to the PsbK family. PSII is composed of 1 copy each of membrane proteins PsbA, PsbB, PsbC, PsbD, PsbE, PsbF, PsbH, PsbI, PsbJ, PsbK, PsbL, PsbM, PsbT, PsbX, PsbY, PsbZ, Psb30/Ycf12, peripheral proteins PsbO, CyanoQ (PsbQ), PsbU, PsbV and a large number of cofactors. It forms dimeric complexes.

The protein resides in the cellular thylakoid membrane. In terms of biological role, one of the components of the core complex of photosystem II (PSII). PSII is a light-driven water:plastoquinone oxidoreductase that uses light energy to abstract electrons from H(2)O, generating O(2) and a proton gradient subsequently used for ATP formation. It consists of a core antenna complex that captures photons, and an electron transfer chain that converts photonic excitation into a charge separation. The sequence is that of Photosystem II reaction center protein K from Synechocystis sp. (strain ATCC 27184 / PCC 6803 / Kazusa).